The chain runs to 145 residues: Secreted LysM effector Vd2LysM (145 aa).

Positions 1–18 are cleaved as a signal peptide; sequence MRPDVFVLFTAFLGPAAA. LysM domains lie at 31-75 and 96-140; these read GWYI…KIKV and GWYH…DIVV.

Belongs to the secreted LysM effector family. As to quaternary structure, forms homodimers in a chitin-independent manner through interactions at the N-termini of EPL2 monomers. Homodimers are further polymerized in a chitin-dependent manner.

Functionally, secreted effector that enables the plant pathogenic fungus to manipulate host defenses for successful infection. Binds chitin, suppresses chitin-induced immune responses and protects hyphae against degradation by plant hydrolytic enzymes. Chitin-induced polymerization of homodimers forms a contiguous ELP2 highly oligomeric super-complexe that may precipitate at infection sites to eliminate chitin oligomers, and thus suppress the activation of chitin-induced plant immunity. This chain is Secreted LysM effector Vd2LysM, found in Verticillium dahliae (strain VdLs.17 / ATCC MYA-4575 / FGSC 10137) (Verticillium wilt).